The chain runs to 214 residues: Large ribosomal subunit protein uL16-like (214 aa).

It belongs to the universal ribosomal protein uL16 family. As to quaternary structure, component of a male germ cell-specific 60S large ribosomal subunit (LSU), which contains RPL10L and RPL39L, instead of RPL10 and RPL39 paralogs. The composition of the rest of the complex is similar to classical ribosomes. As to expression, testis-specific.

It localises to the cytoplasm. Testis-specific component of the ribosome, which is required for the transition from prophase to metaphase in male meiosis I. Compensates for the inactivated X-linked RPL10 paralog during spermatogenesis. The ribosome is a large ribonucleoprotein complex responsible for the synthesis of proteins in the cell. The male germ cell-specific ribosome displays a ribosomal polypeptide exit tunnel of distinct size and charge states compared with the classical ribosome. It is responsible for regulating the biosynthesis and folding of a subset of male germ-cell-specific proteins that are essential for the formation of sperm. This chain is Large ribosomal subunit protein uL16-like, found in Mus musculus (Mouse).